A 331-amino-acid polypeptide reads, in one-letter code: Ketol-acid reductoisomerase (NADP(+)) (331 aa).

Residues 1–181 (MKVYYEKDAN…GGSRSGVIET (181 aa)) form the KARI N-terminal Rossmann domain. NADP(+) contacts are provided by residues 24 to 27 (YGSQ), Arg47, and 82 to 85 (DQVQ). His107 is an active-site residue. Gly133 serves as a coordination point for NADP(+). One can recognise a KARI C-terminal knotted domain in the interval 182–327 (TFREETETDL…GELRGMMPWL (146 aa)). Mg(2+) is bound by residues Asp190, Glu194, Glu226, and Glu230. Residue Ser251 coordinates substrate.

The protein belongs to the ketol-acid reductoisomerase family. Mg(2+) is required as a cofactor.

It catalyses the reaction (2R)-2,3-dihydroxy-3-methylbutanoate + NADP(+) = (2S)-2-acetolactate + NADPH + H(+). The catalysed reaction is (2R,3R)-2,3-dihydroxy-3-methylpentanoate + NADP(+) = (S)-2-ethyl-2-hydroxy-3-oxobutanoate + NADPH + H(+). The protein operates within amino-acid biosynthesis; L-isoleucine biosynthesis; L-isoleucine from 2-oxobutanoate: step 2/4. It functions in the pathway amino-acid biosynthesis; L-valine biosynthesis; L-valine from pyruvate: step 2/4. In terms of biological role, involved in the biosynthesis of branched-chain amino acids (BCAA). Catalyzes an alkyl-migration followed by a ketol-acid reduction of (S)-2-acetolactate (S2AL) to yield (R)-2,3-dihydroxy-isovalerate. In the isomerase reaction, S2AL is rearranged via a Mg-dependent methyl migration to produce 3-hydroxy-3-methyl-2-ketobutyrate (HMKB). In the reductase reaction, this 2-ketoacid undergoes a metal-dependent reduction by NADPH to yield (R)-2,3-dihydroxy-isovalerate. The sequence is that of Ketol-acid reductoisomerase (NADP(+)) from Nitratidesulfovibrio vulgaris (strain ATCC 29579 / DSM 644 / CCUG 34227 / NCIMB 8303 / VKM B-1760 / Hildenborough) (Desulfovibrio vulgaris).